The primary structure comprises 509 residues: Bestrophin-2a (509 aa).

Residues 1–31 (MTVTYTARVANARFGGFSQLLLLWRGSIYKL) are Cytoplasmic-facing. Ala-10 provides a ligand contact to Ca(2+). The helical transmembrane segment at 32–51 (LWRELLCFLGFYMALSAAYR) threads the bilayer. The Extracellular portion of the chain corresponds to 52–60 (FVLTEGQKR). The chain crosses the membrane as a helical span at residues 61-82 (YFEKLVIYCDQYASLIPVSFVL). Residues 83-238 (GFYVTLVVNR…WISVPLVYTQ (156 aa)) are Cytoplasmic-facing. The chain crosses the membrane as a helical span at residues 239 to 255 (VVTIALYSYFLACLIGR). Residues 256 to 274 (QFLDPAQGYKDHDLDLCVP) are Extracellular-facing. The helical transmembrane segment at 275–288 (IFTLLQFFFYAGWL) threads the bilayer. Topologically, residues 289–509 (KVAEQLINPF…PIGEEEENLA (221 aa)) are cytoplasmic. Residues Gln-293, Asn-296, Asp-301, and Asp-304 each contribute to the Ca(2+) site. The interval 454–509 (DPGLPEPEAPPPAGPEPLTLIPGPVEPFSIVTMPGPRGPAPPWLPSPIGEEEENLA) is disordered. Pro residues-rich tracts occupy residues 457–468 (LPEPEAPPPAGP) and 489–498 (PRGPAPPWLP).

This sequence belongs to the anion channel-forming bestrophin (TC 1.A.46) family. Calcium-sensitive chloride channel subfamily. In terms of assembly, pentamer. Interacts with GLUL; this interaction tethers a fraction of GLUL to the membrane, causing a decrease of cytosolic glutamine synthase (GS) activity and inhibits the chloride channel activity of BEST2 by affecting the gating at the aperture in the absence of intracellular glutamate. In terms of tissue distribution, mainly confined to the retinal pigment epithelium. Expressed in colon.

The protein resides in the cell membrane. It localises to the basolateral cell membrane. The catalysed reaction is chloride(in) = chloride(out). It carries out the reaction hydrogencarbonate(in) = hydrogencarbonate(out). The enzyme catalyses L-glutamate(out) = L-glutamate(in). It catalyses the reaction iodide(out) = iodide(in). The catalysed reaction is L-glutamine(out) = L-glutamine(in). With respect to regulation, chloride channel activity is allosterically inhibited by GLUL/glutamine synthase (GS) which affects the gating at the aperture in the absence of intracellular glutamate. Inhibitory effect of GLUL is relieved upon increasing of L-glutamate intracellular level. Its function is as follows. Ligand-gated anion channel that allows the movement of anions across cell membranes when activated by calcium (Ca2+). Transports a large specter of anions, namely mediates the movement of chloride, L-glutamate and iodide. Calcium-binding triggers the dilation of the aperture, but calcium-dependent gating is only effective when the size of the passing anion is bigger than the closed aperture. Mediates the calcium-activated hydrogencarbonate movement and participates in colonic hydrogencarbonate secretion concomitant with mucin secretion. In non-pigmented epithelium (NPE), mediates the efflux of intracellular L-glutamate; binding of intracellular L-glutamate activates and open both the neck and the aperture of the channel, leading to L-glutamate exit promoting chloride influx movement from the extracellular side in trans. Also exhibits a directional permeability for intracellular glutamine, in a similar manner as for L-glutamate. The polypeptide is Bestrophin-2a (Homo sapiens (Human)).